A 382-amino-acid chain; its full sequence is uncharacterized protein (382 aa).

Helical transmembrane passes span 8 to 28 (VMLLLCGLLLLTLAIAVLNTL), 45 to 65 (MVSSSYFTGNLVGTLFTGYLI), 75 to 95 (YLASLIFAAGCVGLGVMVGFW), 102 to 122 (FIAGIGCAMIWVVVESALMCS), 131 to 151 (LLAAYMMVYYMGTFLGQLLVS), 157 to 177 (LLHVLPWVTGMILAGILPLLF), 204 to 224 (LGVNGCIISGIVLGSLYGLMP), 231 to 251 (GMANASIGFWMAVLVSAGILG), 270 to 290 (VQVFVVILGSIAMLTQAAMAP), 291 to 311 (ALFILGAAGFTLYPVAMAWAC), 325 to 345 (ALLLSYTVGSLLGPSFAAMLM), and 349 to 369 (SDNLLFIMIASVSFIYLLMLL).

It belongs to the major facilitator superfamily. YcaD (TC 2.A.1.26) family.

The protein localises to the cell inner membrane. This is an uncharacterized protein from Salmonella newport (strain SL254).